The chain runs to 273 residues: Pyridoxal phosphate homeostasis protein (273 aa).

Position 6 is a phosphoserine (Ser-6). Lys-47 bears the N6-(pyridoxal phosphate)lysine mark. Position 69 is a phosphotyrosine (Tyr-69). Lys-125 is modified (N6-succinyllysine). 2 positions are modified to phosphoserine: Ser-226 and Ser-244. Residues 251–260 (DYSKKTDKPA) are compositionally biased toward basic and acidic residues. Positions 251–273 (DYSKKTDKPAAELQAPEEVAQAH) are disordered.

Belongs to the pyridoxal phosphate-binding protein YggS/PROSC family.

Its function is as follows. Pyridoxal 5'-phosphate (PLP)-binding protein, which may be involved in intracellular homeostatic regulation of pyridoxal 5'-phosphate (PLP), the active form of vitamin B6. The sequence is that of Pyridoxal phosphate homeostasis protein from Bos taurus (Bovine).